The following is a 349-amino-acid chain: UDP-3-O-acylglucosamine N-acyltransferase (349 aa).

His248 serves as the catalytic Proton acceptor.

This sequence belongs to the transferase hexapeptide repeat family. LpxD subfamily. Homotrimer.

The enzyme catalyses a UDP-3-O-[(3R)-3-hydroxyacyl]-alpha-D-glucosamine + a (3R)-hydroxyacyl-[ACP] = a UDP-2-N,3-O-bis[(3R)-3-hydroxyacyl]-alpha-D-glucosamine + holo-[ACP] + H(+). It participates in bacterial outer membrane biogenesis; LPS lipid A biosynthesis. Catalyzes the N-acylation of UDP-3-O-acylglucosamine using 3-hydroxyacyl-ACP as the acyl donor. Is involved in the biosynthesis of lipid A, a phosphorylated glycolipid that anchors the lipopolysaccharide to the outer membrane of the cell. This is UDP-3-O-acylglucosamine N-acyltransferase from Gloeothece citriformis (strain PCC 7424) (Cyanothece sp. (strain PCC 7424)).